Here is a 266-residue protein sequence, read N- to C-terminus: Putative carbamate hydrolase RutD (266 aa).

Positions 14–115 (PVVVLISGLG…TVLISVNGWL (102 aa)) constitute an AB hydrolase-1 domain.

It belongs to the AB hydrolase superfamily. Hydrolase RutD family.

It catalyses the reaction carbamate + 2 H(+) = NH4(+) + CO2. Its function is as follows. Involved in pyrimidine catabolism. May facilitate the hydrolysis of carbamate, a reaction that can also occur spontaneously. This is Putative carbamate hydrolase RutD from Shigella sonnei (strain Ss046).